The primary structure comprises 314 residues: Olfactory receptor 5F1 (314 aa).

Topologically, residues 1 to 25 (MTRKNYTSLTEFVLLGLADTLELQI) are extracellular. N-linked (GlcNAc...) asparagine glycosylation occurs at N5. A helical membrane pass occupies residues 26–46 (ILFLFFLVIYTLTVLGNLGMI). The Cytoplasmic portion of the chain corresponds to 47 to 54 (LLIRIDSQ). Residues 55-75 (LHTPMYFFLANLSFVDVCNST) form a helical membrane-spanning segment. Topologically, residues 76–99 (TITPKMLADLLSEKKTISFAGCFL) are extracellular. A disulfide bridge links C97 with C189. The chain crosses the membrane as a helical span at residues 100-120 (QMYFFISLATTECILFGLMAY). Over 121 to 139 (DRYAAICRPLLYSLIMSRT) the chain is Cytoplasmic. The chain crosses the membrane as a helical span at residues 140 to 160 (VYLKMAAGAFAAGLLNFMVNT). Over 161–196 (SHVSSLSFCDSNVIHHFFCDSPPLFKLSCSDTILKE) the chain is Extracellular. The chain crosses the membrane as a helical span at residues 197–217 (SISSILAGVNIVGTLLVILSS). The Cytoplasmic portion of the chain corresponds to 218–237 (YSYVLFSIFSMHSGEGRHRA). A helical membrane pass occupies residues 238-258 (FSTCASHLTAIILFYATCIYT). Over 259 to 271 (YLRPSSSYSLNQD) the chain is Extracellular. A helical transmembrane segment spans residues 272 to 292 (KVASVFYTVVIPMLNPLIYSL). Topologically, residues 293 to 314 (RSKEVKKALANVISRKRTSSFL) are cytoplasmic.

Belongs to the G-protein coupled receptor 1 family.

It is found in the cell membrane. Odorant receptor. This chain is Olfactory receptor 5F1 (OR5F1), found in Homo sapiens (Human).